Consider the following 91-residue polypeptide: UPF0358 protein SAB0977 (91 aa).

Belongs to the UPF0358 family.

This Staphylococcus aureus (strain bovine RF122 / ET3-1) protein is UPF0358 protein SAB0977.